We begin with the raw amino-acid sequence, 335 residues long: DNA-directed RNA polymerase subunit alpha (335 aa).

Residues 1-233 (MQRNWRELIK…DQLTIFINFE (233 aa)) form an alpha N-terminal domain (alpha-NTD) region. Residues 249–335 (FNDHLFRSVD…DIENRRKEQE (87 aa)) form an alpha C-terminal domain (alpha-CTD) region.

The protein belongs to the RNA polymerase alpha chain family. In terms of assembly, homodimer. The RNAP catalytic core consists of 2 alpha, 1 beta, 1 beta' and 1 omega subunit. When a sigma factor is associated with the core the holoenzyme is formed, which can initiate transcription.

It catalyses the reaction RNA(n) + a ribonucleoside 5'-triphosphate = RNA(n+1) + diphosphate. In terms of biological role, DNA-dependent RNA polymerase catalyzes the transcription of DNA into RNA using the four ribonucleoside triphosphates as substrates. This chain is DNA-directed RNA polymerase subunit alpha, found in Syntrophobacter fumaroxidans (strain DSM 10017 / MPOB).